A 374-amino-acid polypeptide reads, in one-letter code: tRNA-specific 2-thiouridylase MnmA (374 aa).

Residues 13–20 (GMSGGVDS) and Met39 contribute to the ATP site. Residues 99–101 (NPD) form an interaction with target base in tRNA region. Residue Cys104 is the Nucleophile of the active site. Cys104 and Cys201 are oxidised to a cystine. Gly128 contributes to the ATP binding site. Positions 151-153 (KDQ) are interaction with tRNA. Catalysis depends on Cys201, which acts as the Cysteine persulfide intermediate. An interaction with tRNA region spans residues 313–314 (RY).

It belongs to the MnmA/TRMU family.

Its subcellular location is the cytoplasm. The catalysed reaction is S-sulfanyl-L-cysteinyl-[protein] + uridine(34) in tRNA + AH2 + ATP = 2-thiouridine(34) in tRNA + L-cysteinyl-[protein] + A + AMP + diphosphate + H(+). In terms of biological role, catalyzes the 2-thiolation of uridine at the wobble position (U34) of tRNA, leading to the formation of s(2)U34. The chain is tRNA-specific 2-thiouridylase MnmA from Streptococcus suis (strain 98HAH33).